Consider the following 173-residue polypeptide: Adenine phosphoribosyltransferase (173 aa).

Belongs to the purine/pyrimidine phosphoribosyltransferase family. As to quaternary structure, homodimer.

It is found in the cytoplasm. The catalysed reaction is AMP + diphosphate = 5-phospho-alpha-D-ribose 1-diphosphate + adenine. It functions in the pathway purine metabolism; AMP biosynthesis via salvage pathway; AMP from adenine: step 1/1. Its function is as follows. Catalyzes a salvage reaction resulting in the formation of AMP, that is energically less costly than de novo synthesis. This is Adenine phosphoribosyltransferase from Listeria monocytogenes serovar 1/2a (strain ATCC BAA-679 / EGD-e).